Reading from the N-terminus, the 264-residue chain is uncharacterized protein (264 aa).

15 to 22 lines the ATP pocket; sequence KGGTGKTT.

Belongs to the ParA family. MinD subfamily.

This is an uncharacterized protein from Methanocaldococcus jannaschii (strain ATCC 43067 / DSM 2661 / JAL-1 / JCM 10045 / NBRC 100440) (Methanococcus jannaschii).